The following is a 110-amino-acid chain: Protein mistic (110 aa).

Residues 1 to 7 (MFCTFFE) are Cytoplasmic-facing. The chain crosses the membrane as a helical span at residues 8-22 (KHHRKWDILLEKSTG). At 23–31 (VMEAMKVTS) the chain is on the extracellular side. A helical transmembrane segment spans residues 32–55 (EEKEQLSTAIDRMNEGLDAFIQLY). The Cytoplasmic segment spans residues 56–66 (NESEIDEPLIQ). The chain crosses the membrane as a helical span at residues 67-81 (LDDDTAELMKQARDM). Over 82–88 (YGQEKLN) the chain is Extracellular. A helical transmembrane segment spans residues 89–102 (EKLNTIIKQILSIS). The Cytoplasmic segment spans residues 103 to 110 (VSEEGEKE).

In terms of assembly, monomer.

It is found in the cell membrane. In terms of biological role, chaperone that facilitates the production and integration of integral membrane proteins into the bacterial lipid bilayer. The chain is Protein mistic (mstX) from Bacillus subtilis (strain 168).